We begin with the raw amino-acid sequence, 77 residues long: Translation initiation factor IF-1, chloroplastic (77 aa).

An S1-like domain is found at 1–71; that stretch reads MKEQKWIHEG…TRGRIIYRLR (71 aa).

It belongs to the IF-1 family. Component of the 30S ribosomal translation pre-initiation complex which assembles on the 30S ribosome in the order IF-2 and IF-3, IF-1 and N-formylmethionyl-tRNA(fMet); mRNA recruitment can occur at any time during PIC assembly.

The protein resides in the plastid. It is found in the chloroplast. Its function is as follows. One of the essential components for the initiation of protein synthesis. Stabilizes the binding of IF-2 and IF-3 on the 30S subunit to which N-formylmethionyl-tRNA(fMet) subsequently binds. Helps modulate mRNA selection, yielding the 30S pre-initiation complex (PIC). Upon addition of the 50S ribosomal subunit IF-1, IF-2 and IF-3 are released leaving the mature 70S translation initiation complex. The protein is Translation initiation factor IF-1, chloroplastic of Garrya elliptica (Wavyleaf silktassel).